The chain runs to 448 residues: Glutamyl-tRNA reductase (448 aa).

Substrate-binding positions include 49-52 (TCNR), S109, 114-116 (ETQ), and Q120. C50 functions as the Nucleophile in the catalytic mechanism. 189 to 194 (GAGEMG) is an NADP(+) binding site.

This sequence belongs to the glutamyl-tRNA reductase family. Homodimer.

The catalysed reaction is (S)-4-amino-5-oxopentanoate + tRNA(Glu) + NADP(+) = L-glutamyl-tRNA(Glu) + NADPH + H(+). It functions in the pathway porphyrin-containing compound metabolism; protoporphyrin-IX biosynthesis; 5-aminolevulinate from L-glutamyl-tRNA(Glu): step 1/2. Functionally, catalyzes the NADPH-dependent reduction of glutamyl-tRNA(Glu) to glutamate 1-semialdehyde (GSA). This is Glutamyl-tRNA reductase from Staphylococcus epidermidis (strain ATCC 35984 / DSM 28319 / BCRC 17069 / CCUG 31568 / BM 3577 / RP62A).